The following is a 593-amino-acid chain: Glutamyl-tRNA(Gln) amidotransferase subunit B, mitochondrial (593 aa).

The N-terminal 49 residues, 1–49, are a transit peptide targeting the mitochondrion; sequence MLRPWLRQSTRAARSLPCCQCPRPYSSRLPTLTSPSSSVRRLQTSASES. Positions 27 to 42 are enriched in low complexity; the sequence is SRLPTLTSPSSSVRRL. The disordered stretch occupies residues 27–80; it reads SRLPTLTSPSSSVRRLQTSASESQDRVPLRKQLKQNAKALKAEKRQRRESEEAS. A compositionally biased stretch (basic and acidic residues) spans 66 to 80; the sequence is LKAEKRQRRESEEAS.

Belongs to the GatB/GatE family. GatB subfamily. Subunit of the heterotrimeric GatCAB amidotransferase (AdT) complex, composed of A, B and C subunits.

Its subcellular location is the mitochondrion. It carries out the reaction L-glutamyl-tRNA(Gln) + L-glutamine + ATP + H2O = L-glutaminyl-tRNA(Gln) + L-glutamate + ADP + phosphate + H(+). In terms of biological role, allows the formation of correctly charged Gln-tRNA(Gln) through the transamidation of misacylated Glu-tRNA(Gln) in the mitochondria. The reaction takes place in the presence of glutamine and ATP through an activated gamma-phospho-Glu-tRNA(Gln). The protein is Glutamyl-tRNA(Gln) amidotransferase subunit B, mitochondrial of Aspergillus oryzae (strain ATCC 42149 / RIB 40) (Yellow koji mold).